The chain runs to 481 residues: tRNA-2-methylthio-N(6)-dimethylallyladenosine synthase (481 aa).

The MTTase N-terminal domain maps to 24–140; the sequence is KKLFIESYGC…LPNLLNEVEE (117 aa). Residues C33, C69, C103, C178, C182, and C185 each coordinate [4Fe-4S] cluster. One can recognise a Radical SAM core domain in the interval 164 to 411; sequence MSNGITALVA…DLQQKHAWWR (248 aa). The 64-residue stretch at 413 to 476 folds into the TRAM domain; the sequence is EDFIGQTVEV…SGTLKGEAVG (64 aa).

It belongs to the methylthiotransferase family. MiaB subfamily. In terms of assembly, monomer. The cofactor is [4Fe-4S] cluster.

The protein localises to the cytoplasm. The catalysed reaction is N(6)-dimethylallyladenosine(37) in tRNA + (sulfur carrier)-SH + AH2 + 2 S-adenosyl-L-methionine = 2-methylsulfanyl-N(6)-dimethylallyladenosine(37) in tRNA + (sulfur carrier)-H + 5'-deoxyadenosine + L-methionine + A + S-adenosyl-L-homocysteine + 2 H(+). Its function is as follows. Catalyzes the methylthiolation of N6-(dimethylallyl)adenosine (i(6)A), leading to the formation of 2-methylthio-N6-(dimethylallyl)adenosine (ms(2)i(6)A) at position 37 in tRNAs that read codons beginning with uridine. The chain is tRNA-2-methylthio-N(6)-dimethylallyladenosine synthase from Flavobacterium psychrophilum (strain ATCC 49511 / DSM 21280 / CIP 103535 / JIP02/86).